We begin with the raw amino-acid sequence, 564 residues long: Dihydroxy-acid dehydratase (564 aa).

C55 contributes to the [2Fe-2S] cluster binding site. D87 contacts Mg(2+). C128 serves as a coordination point for [2Fe-2S] cluster. Positions 129 and 130 each coordinate Mg(2+). K130 bears the N6-carboxylysine mark. C200 lines the [2Fe-2S] cluster pocket. E452 serves as a coordination point for Mg(2+). Catalysis depends on S478, which acts as the Proton acceptor.

Belongs to the IlvD/Edd family. As to quaternary structure, homodimer. [2Fe-2S] cluster serves as cofactor. Mg(2+) is required as a cofactor.

It carries out the reaction (2R)-2,3-dihydroxy-3-methylbutanoate = 3-methyl-2-oxobutanoate + H2O. It catalyses the reaction (2R,3R)-2,3-dihydroxy-3-methylpentanoate = (S)-3-methyl-2-oxopentanoate + H2O. The protein operates within amino-acid biosynthesis; L-isoleucine biosynthesis; L-isoleucine from 2-oxobutanoate: step 3/4. It participates in amino-acid biosynthesis; L-valine biosynthesis; L-valine from pyruvate: step 3/4. Its function is as follows. Functions in the biosynthesis of branched-chain amino acids. Catalyzes the dehydration of (2R,3R)-2,3-dihydroxy-3-methylpentanoate (2,3-dihydroxy-3-methylvalerate) into 2-oxo-3-methylpentanoate (2-oxo-3-methylvalerate) and of (2R)-2,3-dihydroxy-3-methylbutanoate (2,3-dihydroxyisovalerate) into 2-oxo-3-methylbutanoate (2-oxoisovalerate), the penultimate precursor to L-isoleucine and L-valine, respectively. The polypeptide is Dihydroxy-acid dehydratase (Polaromonas naphthalenivorans (strain CJ2)).